The following is a 154-amino-acid chain: Myoglobin (154 aa).

Residues 2 to 148 (VLSEGEWQLV…FRKDIAAKYK (147 aa)) enclose the Globin domain. Ser4 carries the phosphoserine modification. Residue His65 participates in nitrite binding. His65 lines the O2 pocket. Residue Thr68 is modified to Phosphothreonine. His94 provides a ligand contact to heme b.

Belongs to the globin family. As to quaternary structure, monomeric.

The protein localises to the cytoplasm. It is found in the sarcoplasm. The enzyme catalyses Fe(III)-heme b-[protein] + nitric oxide + H2O = Fe(II)-heme b-[protein] + nitrite + 2 H(+). It carries out the reaction H2O2 + AH2 = A + 2 H2O. Its function is as follows. Monomeric heme protein which primary function is to store oxygen and facilitate its diffusion within muscle tissues. Reversibly binds oxygen through a pentacoordinated heme iron and enables its timely and efficient release as needed during periods of heightened demand. Depending on the oxidative conditions of tissues and cells, and in addition to its ability to bind oxygen, it also has a nitrite reductase activity whereby it regulates the production of bioactive nitric oxide. Under stress conditions, like hypoxia and anoxia, it also protects cells against reactive oxygen species thanks to its pseudoperoxidase activity. This Physeter macrocephalus (Sperm whale) protein is Myoglobin (MB).